The primary structure comprises 439 residues: Acyl-coenzyme A thioesterase 10, mitochondrial (439 aa).

Residues 1–21 constitute a mitochondrion transit peptide; the sequence is MKRAAMRLWTLNKGLLTHGRG. HotDog ACOT-type domains follow at residues 85 to 209 and 289 to 401; these read SYIE…QDSE and EDTK…EKEV.

Belongs to the acyl coenzyme A hydrolase family.

The protein resides in the mitochondrion. Its function is as follows. Catalyzes the hydrolysis of acyl-CoAs into free fatty acids and coenzyme A (CoASH), regulating their respective intracellular levels. Active on long chain acyl-CoAs. In Mus musculus (Mouse), this protein is Acyl-coenzyme A thioesterase 10, mitochondrial.